A 61-amino-acid polypeptide reads, in one-letter code: UPF0181 protein MS1074 (61 aa).

Belongs to the UPF0181 family.

The chain is UPF0181 protein MS1074 from Mannheimia succiniciproducens (strain KCTC 0769BP / MBEL55E).